The following is a 470-amino-acid chain: Glutamate--tRNA ligase (470 aa).

The 'HIGH' region motif lies at 12-22 (PSPTGIFHVGG). C103, C105, C125, and D127 together coordinate Zn(2+). The 'KMSKS' region motif lies at 236–240 (KLSKR). K239 is a binding site for ATP.

It belongs to the class-I aminoacyl-tRNA synthetase family. Glutamate--tRNA ligase type 1 subfamily. In terms of assembly, monomer. The cofactor is Zn(2+).

The protein localises to the cytoplasm. The catalysed reaction is tRNA(Glu) + L-glutamate + ATP = L-glutamyl-tRNA(Glu) + AMP + diphosphate. In terms of biological role, catalyzes the attachment of glutamate to tRNA(Glu) in a two-step reaction: glutamate is first activated by ATP to form Glu-AMP and then transferred to the acceptor end of tRNA(Glu). This Frankia casuarinae (strain DSM 45818 / CECT 9043 / HFP020203 / CcI3) protein is Glutamate--tRNA ligase.